A 203-amino-acid chain; its full sequence is MAENAAPGLISELKLAVPWGHIAAKAWGSLQGPPVLCLHGWLDNASSFDRLIPLLPQDFYYVAMDFGGHGLSSHYSPGVPYYLQTFVSEIRRVVAALKWNRFSILGHSFGGVVGGMFFCTFPEMVDKLILLDTPLFLLESDEMENLLTYKRRAIEHVLQVEASQEPSHVFSLKQLLQRQRTALTSSAGSCVRIPSGSCRPMSC.

The AB hydrolase-1 domain maps to 33–145 (PPVLCLHGWL…FLLESDEMEN (113 aa)). The active site involves Ser-108.

The protein belongs to the AB hydrolase superfamily.

Functionally, putative serine hydrolase. This chain is Serine hydrolase-like protein (SERHL), found in Homo sapiens (Human).